The following is a 456-amino-acid chain: UDP-N-acetylmuramoylalanine--D-glutamate ligase (456 aa).

122 to 128 (GSNGKST) provides a ligand contact to ATP.

This sequence belongs to the MurCDEF family.

It localises to the cytoplasm. It catalyses the reaction UDP-N-acetyl-alpha-D-muramoyl-L-alanine + D-glutamate + ATP = UDP-N-acetyl-alpha-D-muramoyl-L-alanyl-D-glutamate + ADP + phosphate + H(+). The protein operates within cell wall biogenesis; peptidoglycan biosynthesis. Cell wall formation. Catalyzes the addition of glutamate to the nucleotide precursor UDP-N-acetylmuramoyl-L-alanine (UMA). This is UDP-N-acetylmuramoylalanine--D-glutamate ligase from Saccharophagus degradans (strain 2-40 / ATCC 43961 / DSM 17024).